The chain runs to 362 residues: Putative RING-H2 finger protein ATL21B (362 aa).

A signal peptide spans 1-23 (MIISKQLFLLFFLLFFIFPLRHA). A helical transmembrane segment spans residues 234–254 (VVAVLICLSIIGAVILFVTCI). Residues 316-358 (CPICLSEYVSKETVRFIPECDHCFHAKCIDVWLKIHGSCPLCR) form an RING-type; atypical zinc finger.

Belongs to the RING-type zinc finger family. ATL subfamily.

It is found in the membrane. The catalysed reaction is S-ubiquitinyl-[E2 ubiquitin-conjugating enzyme]-L-cysteine + [acceptor protein]-L-lysine = [E2 ubiquitin-conjugating enzyme]-L-cysteine + N(6)-ubiquitinyl-[acceptor protein]-L-lysine.. It functions in the pathway protein modification; protein ubiquitination. This is Putative RING-H2 finger protein ATL21B (ATL21B) from Arabidopsis thaliana (Mouse-ear cress).